The sequence spans 431 residues: UDP-N-acetylglucosamine--N-acetylmuramyl-(pentapeptide) pyrophosphoryl-undecaprenol N-acetylglucosamine transferase (431 aa).

UDP-N-acetyl-alpha-D-glucosamine contacts are provided by residues 29-31, Asn141, Arg177, Ser205, Ile258, and Gln303; that span reads TGG. A disordered region spans residues 370 to 431; that stretch reads AGSGDGQPPA…NPGASAGGAP (62 aa). Positions 395-420 are enriched in polar residues; sequence KQGSMQTSVNGDRSAQLIATNPQSRL.

This sequence belongs to the glycosyltransferase 28 family. MurG subfamily.

The protein localises to the cell inner membrane. The enzyme catalyses di-trans,octa-cis-undecaprenyl diphospho-N-acetyl-alpha-D-muramoyl-L-alanyl-D-glutamyl-meso-2,6-diaminopimeloyl-D-alanyl-D-alanine + UDP-N-acetyl-alpha-D-glucosamine = di-trans,octa-cis-undecaprenyl diphospho-[N-acetyl-alpha-D-glucosaminyl-(1-&gt;4)]-N-acetyl-alpha-D-muramoyl-L-alanyl-D-glutamyl-meso-2,6-diaminopimeloyl-D-alanyl-D-alanine + UDP + H(+). It participates in cell wall biogenesis; peptidoglycan biosynthesis. Cell wall formation. Catalyzes the transfer of a GlcNAc subunit on undecaprenyl-pyrophosphoryl-MurNAc-pentapeptide (lipid intermediate I) to form undecaprenyl-pyrophosphoryl-MurNAc-(pentapeptide)GlcNAc (lipid intermediate II). The protein is UDP-N-acetylglucosamine--N-acetylmuramyl-(pentapeptide) pyrophosphoryl-undecaprenol N-acetylglucosamine transferase of Xanthomonas euvesicatoria pv. vesicatoria (strain 85-10) (Xanthomonas campestris pv. vesicatoria).